The primary structure comprises 140 residues: Alpha-lactalbumin (140 aa).

The N-terminal stretch at 1–19 is a signal peptide; sequence MMSLLSLLLLGIALPATQA. Residues 20 to 140 form the C-type lysozyme domain; sequence IDYRKCQASQ…CIEDLDQWRC (121 aa). Intrachain disulfides connect Cys25/Cys140, Cys47/Cys131, Cys80/Cys96, and Cys92/Cys110. Asn63 carries an N-linked (GlcNAc...) asparagine glycan. The Ca(2+) site is built by Lys98, Asp101, Asp103, Asp106, and Asp107.

Belongs to the glycosyl hydrolase 22 family. In terms of assembly, lactose synthase (LS) is a heterodimer of a catalytic component, beta1,4-galactosyltransferase (beta4Gal-T1) and a regulatory component, alpha-lactalbumin (LA). Mammary gland specific. Secreted in milk.

The protein resides in the secreted. Regulatory subunit of lactose synthase, changes the substrate specificity of galactosyltransferase in the mammary gland making glucose a good acceptor substrate for this enzyme. This enables LS to synthesize lactose, the major carbohydrate component of milk. In other tissues, galactosyltransferase transfers galactose onto the N-acetylglucosamine of the oligosaccharide chains in glycoproteins. The polypeptide is Alpha-lactalbumin (LALBA) (Notamacropus eugenii (Tammar wallaby)).